A 261-amino-acid polypeptide reads, in one-letter code: Cell division protein B (261 aa).

Residues 213–261 (SEDMILNYIKTTGGFIDVDYIAKNFDVSKDEVFNVLRRLEEKGLIVLEG) are winged-helix-like fold.

As to quaternary structure, interacts with CdvA. Interacts with CdvC.

Its subcellular location is the cytoplasm. The protein resides in the nucleoid. In terms of biological role, part of a cell division machinery. The CdvA, CdvB and CdvC proteins polymerize between segregating nucleoids and persist throughout cell division, forming a successively smaller structure during constriction. The sequence is that of Cell division protein B from Sulfolobus acidocaldarius (strain ATCC 33909 / DSM 639 / JCM 8929 / NBRC 15157 / NCIMB 11770).